Consider the following 309-residue polypeptide: MTARIALASLFVVAAVLAQPWQTTTQRWVLGVSIAAVIVLLAWWKGMFLTTRIGRALAMVRRNRAEDTVETDAHRATVVLRVDPAAPAQLPVVVGYLDRYGITCDKVRITHRDAGGTRRSWISLTVDAVDNLAALQARSARIPLQDTTEVVGRRLADHLREQGWTVTVVEGVDTPLPVSGKETWRGVADDAGVVAAYRVKVDDRLDEVLAEIGHLPAEETWTALEFTGSPAEPLLTVCAAVRTSDRPAAKAPLAGLTPARGRHRPALAALNPLSTERLDGTAVPLPAVVRTSVKGSVEHEAAQEAGHPA.

The next 2 helical transmembrane spans lie at 5-25 (IALA…QTTT) and 29-49 (VLGV…GMFL).

This sequence belongs to the EccE family. Part of the ESX-3 / type VII secretion system (T7SS), which is composed of cytosolic and membrane components. The ESX-3 membrane complex is composed of EccB3, EccC3, EccD3 and EccE3.

The protein localises to the cell inner membrane. Functionally, part of the ESX-3 specialized secretion system, which is required for siderophore-mediated iron acquisition and for the secretion of EsxH and EsxG. This Mycolicibacterium smegmatis (strain ATCC 700084 / mc(2)155) (Mycobacterium smegmatis) protein is ESX-3 secretion system protein EccE3.